Here is a 424-residue protein sequence, read N- to C-terminus: GTPase Obg (424 aa).

The 158-residue stretch at 1-158 folds into the Obg domain; sequence MFVDKARIFV…RWISLELKLL (158 aa). Residues 159–331 form the OBG-type G domain; the sequence is ADVGLIGFPN…LLKECARVLS (173 aa). Residues 165–172, 190–194, 212–215, 282–285, and 312–314 contribute to the GTP site; these read GFPNVGKS, FTTIT, DIPG, NKAD, and SAA. Residues Ser172 and Thr192 each contribute to the Mg(2+) site. Residues 345-424 form the OCT domain; that stretch reads RFVPEDKHFT…LNDFEFEFLK (80 aa).

This sequence belongs to the TRAFAC class OBG-HflX-like GTPase superfamily. OBG GTPase family. As to quaternary structure, monomer. Mg(2+) serves as cofactor.

It is found in the cytoplasm. Its function is as follows. An essential GTPase which binds GTP, GDP and possibly (p)ppGpp with moderate affinity, with high nucleotide exchange rates and a fairly low GTP hydrolysis rate. Plays a role in control of the cell cycle, stress response, ribosome biogenesis and in those bacteria that undergo differentiation, in morphogenesis control. The protein is GTPase Obg of Clostridium acetobutylicum (strain ATCC 824 / DSM 792 / JCM 1419 / IAM 19013 / LMG 5710 / NBRC 13948 / NRRL B-527 / VKM B-1787 / 2291 / W).